The sequence spans 24 residues: Brevinin-1PTa (24 aa).

Cysteines 18 and 24 form a disulfide.

Expressed by the skin glands.

The protein resides in the secreted. Has antibacterial activity against the Gram-positive bacterium S.aureus ATCC 25923 (MIC=3 uM) and the Gram-negative bacterium E.coli ATCC 25726 (MIC=24 uM). The sequence is that of Brevinin-1PTa from Pulchrana picturata (Malaysian fire frog).